A 417-amino-acid chain; its full sequence is UDP-N-acetylglucosamine 1-carboxyvinyltransferase (417 aa).

22 to 23 contributes to the phosphoenolpyruvate binding site; it reads KN. R92 contributes to the UDP-N-acetyl-alpha-D-glucosamine binding site. Residue C116 is the Proton donor of the active site. C116 carries the 2-(S-cysteinyl)pyruvic acid O-phosphothioketal modification. The UDP-N-acetyl-alpha-D-glucosamine site is built by D304 and V326.

The protein belongs to the EPSP synthase family. MurA subfamily.

The protein resides in the cytoplasm. The catalysed reaction is phosphoenolpyruvate + UDP-N-acetyl-alpha-D-glucosamine = UDP-N-acetyl-3-O-(1-carboxyvinyl)-alpha-D-glucosamine + phosphate. It participates in cell wall biogenesis; peptidoglycan biosynthesis. Functionally, cell wall formation. Adds enolpyruvyl to UDP-N-acetylglucosamine. This chain is UDP-N-acetylglucosamine 1-carboxyvinyltransferase, found in Syntrophotalea carbinolica (strain DSM 2380 / NBRC 103641 / GraBd1) (Pelobacter carbinolicus).